The primary structure comprises 515 residues: BURP domain-containing protein 9 (515 aa).

Positions 1–29 (MKATGGPLPLILFLLIIIVLITAQHTAIA) are cleaved as a signal peptide. A BURP domain is found at 292–507 (YFFEDNLAPG…GRGSIIWVPV (216 aa)). Residues Asn-321, Asn-332, and Asn-470 are each glycosylated (N-linked (GlcNAc...) asparagine).

In terms of tissue distribution, expressed in shoot and panicles.

The polypeptide is BURP domain-containing protein 9 (BURP9) (Oryza sativa subsp. japonica (Rice)).